Here is a 60-residue protein sequence, read N- to C-terminus: Cytotoxin 1 (60 aa).

Cystine bridges form between cysteine 3–cysteine 21, cysteine 14–cysteine 38, cysteine 42–cysteine 53, and cysteine 54–cysteine 59.

It belongs to the three-finger toxin family. Short-chain subfamily. Type IA cytotoxin sub-subfamily. In terms of assembly, monomer in solution; Homodimer and oligomer in the presence of negatively charged lipids forming a pore with a size ranging between 20 and 30 Angstroms. Expressed by the venom gland.

The protein resides in the secreted. The protein localises to the target cell membrane. In terms of biological role, shows cytolytic activity on many different cells by forming pore in lipid membranes. In vivo, increases heart rate or kills the animal by cardiac arrest. In addition, it binds to heparin with high affinity, interacts with Kv channel-interacting protein 1 (KCNIP1) in a calcium-independent manner, and binds to integrin alpha-V/beta-3 (ITGAV/ITGB3) with moderate affinity. The protein is Cytotoxin 1 of Naja mossambica (Mozambique spitting cobra).